A 552-amino-acid chain; its full sequence is MLFAPPNLETKELFWIIYILILIPKVFAKVMSVRELFPFFKWGFNIRRSNFLVPILSNNVIVTGEEAVQYEKPLPYIPQHNQQQQQKQQPSQDYIQQPQNDNNINSGKEQEQQQQQQQQQQQTPDITNQPTKTNKKIPIKELSNEEILIKLEKGEVLAYRLENELGDCSRAVEIRRMLLEKQLSKKIEPIPHEGFDFAKVQGQCCENVIGYVPIPVGTAGPIQLNGQLVTIPMATTEGCLVASTHRGCKAITESGGAKCTITSRGMTRAPVVRFSDIVKASEFVSWINDTDNYQALKAVFDSTSRFARLSAIKCTIAGRSVYIRFKCDTGDAMGMNMVSKGVEAVLEHLKIIFDDMTLLSISGNMCTDKKPSSINWTEGRGRSVVCEAMITGDVVQRVLKTNVQALVDLNIAKNLIGSAMAGSIGGFNAHASNIVTAIFLATGQDCAQNVESSNCITQMEACNDGQDLYITVTMPSIEVGTVGGGTSLPAQSACLDIIGVKGSSSSKPGANADQLAKTIASAVMAGELSLMSALSAGHLMKSHLQYNRAKTN.

Low complexity-rich tracts occupy residues 79 to 99 (QHNQ…QQPQ) and 112 to 122 (QQQQQQQQQQQ). The interval 79–138 (QHNQQQQQKQQPSQDYIQQPQNDNNINSGKEQEQQQQQQQQQQQTPDITNQPTKTNKKIP) is disordered. Polar residues predominate over residues 123–132 (TPDITNQPTK). Glu-237 serves as the catalytic Charge relay system. The N-linked (GlcNAc...) asparagine glycan is linked to Asn-288. Catalysis depends on Lys-369, which acts as the Charge relay system. Asn-375 carries N-linked (GlcNAc...) asparagine glycosylation. Asp-445 functions as the Charge relay system in the catalytic mechanism. The active-site Proton donor is His-543.

The protein belongs to the HMG-CoA reductase family.

Its subcellular location is the endoplasmic reticulum membrane. The enzyme catalyses (R)-mevalonate + 2 NADP(+) + CoA = (3S)-3-hydroxy-3-methylglutaryl-CoA + 2 NADPH + 2 H(+). The protein operates within metabolic intermediate biosynthesis; (R)-mevalonate biosynthesis; (R)-mevalonate from acetyl-CoA: step 3/3. In terms of biological role, this transmembrane glycoprotein is involved in the control of cholesterol biosynthesis. It is the rate-limiting enzyme of the sterol biosynthesis. The chain is 3-hydroxy-3-methylglutaryl-coenzyme A reductase 1 (hmgA) from Dictyostelium discoideum (Social amoeba).